A 121-amino-acid polypeptide reads, in one-letter code: Small ribosomal subunit protein uS13 (121 aa).

The segment at glycine 95 to serine 121 is disordered.

Belongs to the universal ribosomal protein uS13 family. In terms of assembly, part of the 30S ribosomal subunit. Forms a loose heterodimer with protein S19. Forms two bridges to the 50S subunit in the 70S ribosome.

Functionally, located at the top of the head of the 30S subunit, it contacts several helices of the 16S rRNA. In the 70S ribosome it contacts the 23S rRNA (bridge B1a) and protein L5 of the 50S subunit (bridge B1b), connecting the 2 subunits; these bridges are implicated in subunit movement. Contacts the tRNAs in the A and P-sites. This is Small ribosomal subunit protein uS13 from Campylobacter jejuni subsp. jejuni serotype O:6 (strain 81116 / NCTC 11828).